Reading from the N-terminus, the 389-residue chain is Gustatory receptor for bitter taste 22e (389 aa).

The Cytoplasmic segment spans residues 1–14; it reads MFRPSGSGYRQKWT. The helical transmembrane segment at 15–35 threads the bilayer; it reads GLTLKGALYGSWILGVFPFAY. The Extracellular segment spans residues 36–46; that stretch reads DSWTRTLRRSK. A helical membrane pass occupies residues 47–67; the sequence is WLIAYGFVLNAAFILLVVTND. The Cytoplasmic segment spans residues 68-142; the sequence is TESETPLRME…SLEECISFDR (75 aa). A helical transmembrane segment spans residues 143–163; sequence FVLYKGFSVVLELVSMLVLEL. The Extracellular portion of the chain corresponds to 164–170; that stretch reads GMSPNYS. N-linked (GlcNAc...) asparagine glycosylation is present at asparagine 168. The helical transmembrane segment at 171-191 threads the bilayer; sequence AQFFIGLGSLCLMLLAVLLGA. The Cytoplasmic portion of the chain corresponds to 192-254; the sequence is SHFHLAVVFV…QRLASIYDYQ (63 aa). Residues 255 to 275 traverse the membrane as a helical segment; that stretch reads MVMVMVSFLIANVLGIYFFII. The Extracellular segment spans residues 276 to 287; that stretch reads YSISLNKSLDFK. A glycan (N-linked (GlcNAc...) asparagine) is linked at asparagine 281. Residues 288-308 traverse the membrane as a helical segment; the sequence is ILVFVQALVINMLDFWLNVEI. At 309–366 the chain is on the cytoplasmic side; sequence CELAERTGRQTSTILKLFNDIENIDEKLERSITDFALFCSHRRLRFHHCGLFYVNYEM. The helical transmembrane segment at 367 to 387 threads the bilayer; sequence GFRMAITSFLYLLFLIQFDYW. The Extracellular segment spans residues 388-389; that stretch reads NL.

The protein belongs to the insect chemoreceptor superfamily. Gustatory receptor (GR) family. Gr22e subfamily. As to expression, taste bristles on the labial palp, labral and cibarial sense organs, chemosensory bristles on the leg and anterior wing margin. In larvae, is expressed in neurons of the terminal external chemosensory organ and in the dorsal pharyngeal sense organ. Neurons expressing Gr22e also express Gr66a and correspond to taste neurons that mediate sensitivity to bitter compounds.

The protein localises to the cell membrane. Gustatory receptor which mediates acceptance or avoidance behavior, depending on its substrates. Seems to be involved in the sensing of bitter taste since it is expressed in neurons that mediate sensitivity to bitter compounds which are also avoidance-type taste neurons. The protein is Gustatory receptor for bitter taste 22e (Gr22e) of Drosophila melanogaster (Fruit fly).